A 230-amino-acid chain; its full sequence is Secretory carrier-associated membrane protein 4 (230 aa).

Residues 1-39 are Cytoplasmic-facing; sequence MSGKENNFPPLPKFIPLKPCFYQNFSDEIPIEHQVLVKR. Transmembrane regions (helical) follow at residues 40 to 60, 61 to 81, 105 to 125, and 149 to 169; these read IYRLWLFYCATLGVNLVACLA, WWIAGGSGANFGLALLWLLLF, FMAFFFIFGAQFILTIIQAVG, and VVMLLPAIMFSMSAAMMAVMI. Topologically, residues 170–230 are cytoplasmic; it reads MKVHSIYRGT…SYPASGGQWP (61 aa). T194 is subject to Phosphothreonine. The interval 208 to 230 is disordered; it reads FSGNSLPEYPTVPSYPASGGQWP.

This sequence belongs to the SCAMP family.

The protein localises to the membrane. Probably involved in membrane protein trafficking. This is Secretory carrier-associated membrane protein 4 (SCAMP4) from Bos taurus (Bovine).